The sequence spans 145 residues: 3-hydroxyacyl-[acyl-carrier-protein] dehydratase FabZ (145 aa).

The active site involves His-49.

It belongs to the thioester dehydratase family. FabZ subfamily.

The protein resides in the cytoplasm. The catalysed reaction is a (3R)-hydroxyacyl-[ACP] = a (2E)-enoyl-[ACP] + H2O. In terms of biological role, involved in unsaturated fatty acids biosynthesis. Catalyzes the dehydration of short chain beta-hydroxyacyl-ACPs and long chain saturated and unsaturated beta-hydroxyacyl-ACPs. The polypeptide is 3-hydroxyacyl-[acyl-carrier-protein] dehydratase FabZ (Rickettsia bellii (strain OSU 85-389)).